Consider the following 481-residue polypeptide: tRNA:m(4)X modification enzyme TRM13 homolog (481 aa).

The residue at position 2 (alanine 2) is an N-acetylalanine. The CHHC U11-48K-type zinc finger occupies 56–83 (RILCPLDPKHTVYEDQLAKHLKKCNSRE). The Zn(2+) site is built by cysteine 59, histidine 65, histidine 75, and cysteine 79. A coiled-coil region spans residues 113-140 (SLSEEQLEKLIKKLRKASEGLNSTLKDH). Positions 381 to 408 (ETSNSTTKRQDNQNDDSEEHDDGGYRIT) are disordered.

Belongs to the methyltransferase TRM13 family.

It catalyses the reaction cytidine(4) in tRNA(Pro) + S-adenosyl-L-methionine = 2'-O-methylcytidine(4) in tRNA(Pro) + S-adenosyl-L-homocysteine + H(+). The catalysed reaction is cytidine(4) in tRNA(Gly)(GCC) + S-adenosyl-L-methionine = 2'-O-methylcytidine(4) in tRNA(Gly)(GCC) + S-adenosyl-L-homocysteine + H(+). It carries out the reaction adenosine(4) in tRNA(His) + S-adenosyl-L-methionine = 2'-O-methyladenosine(4) in tRNA(His) + S-adenosyl-L-homocysteine + H(+). Functionally, tRNA methylase which 2'-O-methylates cytidine(4) in tRNA(Pro) and tRNA(Gly)(GCC), and adenosine(4) in tRNA(His). The chain is tRNA:m(4)X modification enzyme TRM13 homolog (TRMT13) from Homo sapiens (Human).